The sequence spans 411 residues: Na(+)-translocating NADH-quinone reductase subunit F (411 aa).

A helical transmembrane segment spans residues 5–25; that stretch reads VILALGIAAFTVIVLVLVAII. The 95-residue stretch at 36–130 folds into the 2Fe-2S ferredoxin-type domain; sequence GDITIDINDD…NMEVELPEEI (95 aa). [2Fe-2S] cluster is bound by residues Cys-73, Cys-79, Cys-82, and Cys-114. The FAD-binding FR-type domain occupies 133-273; the sequence is VKKWECTVIS…SGPFGEFFAK (141 aa).

This sequence belongs to the NqrF family. As to quaternary structure, composed of six subunits; NqrA, NqrB, NqrC, NqrD, NqrE and NqrF. The cofactor is [2Fe-2S] cluster. FAD is required as a cofactor.

It is found in the cell inner membrane. The enzyme catalyses a ubiquinone + n Na(+)(in) + NADH + H(+) = a ubiquinol + n Na(+)(out) + NAD(+). NQR complex catalyzes the reduction of ubiquinone-1 to ubiquinol by two successive reactions, coupled with the transport of Na(+) ions from the cytoplasm to the periplasm. The first step is catalyzed by NqrF, which accepts electrons from NADH and reduces ubiquinone-1 to ubisemiquinone by a one-electron transfer pathway. The polypeptide is Na(+)-translocating NADH-quinone reductase subunit F (Haemophilus influenzae (strain PittGG)).